The chain runs to 393 residues: Prokineticin receptor 1 (393 aa).

Residues 1 to 62 lie on the Extracellular side of the membrane; sequence METTMGFMDD…TNSRTFFAAK (62 aa). Residues N11, N14, and N36 are each glycosylated (N-linked (GlcNAc...) asparagine). Residues 63-83 form a helical membrane-spanning segment; it reads IVIGMALVGIMLVCGIGNFIF. Over 84-98 the chain is Cytoplasmic; the sequence is IAALVRYKKLRNLTN. A helical transmembrane segment spans residues 99 to 119; the sequence is LLIANLAISDFLVAIVCCPFE. Residues 120–146 lie on the Extracellular side of the membrane; it reads MDYYVVRQLSWEHGHVLCTSVNYLRTV. C137 and C217 are joined by a disulfide. Residues 147-167 traverse the membrane as a helical segment; sequence SLYVSTNALLAIAIDRYLAIV. The Cytoplasmic segment spans residues 168 to 180; that stretch reads HPLRPRMKCQTAT. Residues 181-201 form a helical membrane-spanning segment; that stretch reads GLIALVWTVSILIAIPSAYFT. Residues 202–232 lie on the Extracellular side of the membrane; it reads TETVLVIVKSQEKIFCGQIWPVDQQLYYKSY. A helical transmembrane segment spans residues 233-253; that stretch reads FLFIFGIEFVGPVVTMTLCYA. At 254–282 the chain is on the cytoplasmic side; sequence RISRELWFKAVPGFQTEQIRKRLRCRRKT. Residues 283 to 303 traverse the membrane as a helical segment; that stretch reads VLVLMCILTAYVLCWAPFYGF. Over 304-322 the chain is Extracellular; the sequence is TIVRDFFPTVFVKEKHYLT. The chain crosses the membrane as a helical span at residues 323–343; sequence AFYIVECIAMSNSMINTLCFV. Topologically, residues 344-393 are cytoplasmic; the sequence is TVKNDTVKYFKKIMLLHWKASYNGGKSSADLDLKTIGMPATEEVDCIRLK.

Belongs to the G-protein coupled receptor 1 family. Localizes to glandular epithelium, stroma and vascular endothelial cells of first trimester decidua (at protein level). Up-regulated in first trimester decidua when compared with non-pregnant endometrium. Expressed in the stomach, throughout the small intestine, colon, rectum, thyroid gland, pituitary gland, salivary gland, adrenal gland, testis, ovary, brain, spleen, prostate and pancreas.

It is found in the cell membrane. Its function is as follows. Receptor for prokineticin 1. Exclusively coupled to the G(q) subclass of heteromeric G proteins. Activation leads to mobilization of calcium, stimulation of phosphoinositide turnover and activation of p44/p42 mitogen-activated protein kinase. May play a role during early pregnancy. In Homo sapiens (Human), this protein is Prokineticin receptor 1 (PROKR1).